A 328-amino-acid chain; its full sequence is Integrator complex subunit 12 (328 aa).

The interval 1-45 (MAANIAAAAAAAQEVDPVLKKAIKLLHSSNPTSAAELRLLLDEAL) is sufficient for binding to IntS1 and IntS9 and for 3'-end snRNA processing. A PHD-type zinc finger spans residues 128 to 185 (DLNCCVCGEMVFTATNRLIECSKCGAMYHQECHKPPITKEEAADDQEQNWQCDTCCNK). 4 stretches are compositionally biased toward low complexity: residues 215 to 233 (KAKSSVASSRSSNSSNSSS), 241 to 264 (SSSTNASSSSSSKHGHKSSSSSSS), 274 to 283 (KSTAASSLSA), and 292 to 311 (SSGTSSRRSGSSTKSSSKSS). Residues 215-328 (KAKSSVASSR…GSSSKRRSKQ (114 aa)) form a disordered region.

The protein belongs to the Integrator subunit 12 family. Belongs to the multiprotein complex Integrator, at least composed of IntS1, IntS2, IntS3, IntS4, omd/IntS5, IntS6, defl/IntS7, IntS8, IntS9, IntS10, IntS11, IntS12, asun/IntS13, IntS14 and IntS15. The core complex associates with protein phosphatase 2A subunits mts/PP2A and Pp2A-29B, to form the Integrator-PP2A (INTAC) complex. Within the complex, interacts with IntS1 and IntS9. Interaction with IntS1 is likely to be important for promoting 3'-end processing of snRNAs.

The protein localises to the nucleus. Functionally, component of the integrator complex, a multiprotein complex that terminates RNA polymerase II (Pol II) transcription in the promoter-proximal region of genes. The integrator complex provides a quality checkpoint during transcription elongation by driving premature transcription termination of transcripts that are unfavorably configured for transcriptional elongation: the complex terminates transcription by (1) catalyzing dephosphorylation of the C-terminal domain (CTD) of Pol II subunit Polr2A/Rbp1 and Spt5, and (2) degrading the exiting nascent RNA transcript via endonuclease activity. The integrator complex is also involved in the 3'-end processing of the U7 snRNA, and also the spliceosomal snRNAs U1, U2, U4 and U5. Required for the normal expression of the Integrator complex component IntS1. This is Integrator complex subunit 12 from Drosophila melanogaster (Fruit fly).